The chain runs to 142 residues: Large ribosomal subunit protein uL13 (142 aa).

It belongs to the universal ribosomal protein uL13 family. In terms of assembly, part of the 50S ribosomal subunit.

In terms of biological role, this protein is one of the early assembly proteins of the 50S ribosomal subunit, although it is not seen to bind rRNA by itself. It is important during the early stages of 50S assembly. The sequence is that of Large ribosomal subunit protein uL13 from Shewanella putrefaciens (strain CN-32 / ATCC BAA-453).